Here is a 385-residue protein sequence, read N- to C-terminus: Lysine 6-dehydrogenase (385 aa).

It belongs to the saccharopine dehydrogenase family. As to quaternary structure, homohexamer.

It catalyses the reaction L-lysine + NAD(+) = L-1-piperideine-6-carboxylate + NH4(+) + NADH + 2 H(+). Catalyzes the oxidative deamination of L-lysine in the presence of NAD. Can also use (S)-(2-aminoethyl)-L-cysteine as a substrate, but more slowly. Can use both NAD and NADP but the preferred substrate is NAD. This Geobacillus stearothermophilus (Bacillus stearothermophilus) protein is Lysine 6-dehydrogenase (lysDH).